We begin with the raw amino-acid sequence, 107 residues long: Nucleoid-associated protein Msil_0275 (107 aa).

Belongs to the YbaB/EbfC family. In terms of assembly, homodimer.

The protein localises to the cytoplasm. The protein resides in the nucleoid. Its function is as follows. Binds to DNA and alters its conformation. May be involved in regulation of gene expression, nucleoid organization and DNA protection. The polypeptide is Nucleoid-associated protein Msil_0275 (Methylocella silvestris (strain DSM 15510 / CIP 108128 / LMG 27833 / NCIMB 13906 / BL2)).